Reading from the N-terminus, the 215-residue chain is Formate dehydrogenase subunit beta (215 aa).

The region spanning 3–32 (KGFFVDTTRCTACRGCQVACKQWHGNPATP) is the 4Fe-4S ferredoxin-type 1 domain. [4Fe-4S] cluster is bound by residues C12, C15, C18, C22, C73, C76, C81, C121, C138, C141, C153, and C157. Positions 129-168 (VAESNQMAKCDMCIDRITNGLRPACVTSCPTGAMNFGDLS) constitute a 4Fe-4S ferredoxin-type 2 domain.

Heterodimer of alpha (FdhA) and beta (FdhB) subunits. [4Fe-4S] cluster serves as cofactor.

It is found in the periplasm. Its function is as follows. Beta chain of the formate dehydrogenase (FDH) catalyzes the reversible two-electron oxidation of formate to carbon dioxide. FDH loses activity in the presence of air, but this activity can be restored. This chain is an electron transfer unit. In Megalodesulfovibrio gigas (strain ATCC 19364 / DSM 1382 / NCIMB 9332 / VKM B-1759) (Desulfovibrio gigas), this protein is Formate dehydrogenase subunit beta.